A 24-amino-acid polypeptide reads, in one-letter code: M-poneritoxin-Ng2b (24 aa).

Leu24 carries the post-translational modification Leucine amide.

Expressed by the venom gland.

It is found in the secreted. Its function is as follows. Has a broad spectrum of activity against both Gram-positive and Gram-negative bacteria. Is inactive against yeast, erythrocytes, and insects. This Neoponera goeldii (Ponerine ant) protein is M-poneritoxin-Ng2b.